Reading from the N-terminus, the 893-residue chain is Dystroglycan 1 (893 aa).

Positions 1–27 (MSVDNWLLHPLWGQTFLLLLSVAVAQA) are cleaved as a signal peptide. Positions 28 to 406 (HWPSEPSEAV…GQIRPTLTIP (379 aa)) are required for laminin recognition. An O-glycosylated at one site region spans residues 47-69 (SMHSVLSDFQEAVPTVVGIPDGT). The N-linked (GlcNAc...) asparagine glycan is linked to Asn-139. Cys-180 and Cys-262 are disulfide-bonded. The segment at 314–483 (ATPTPVTAIG…PPTRIRTTTS (170 aa)) is mucin-like domain. 3 O-linked (Man6P...) threonine glycosylation sites follow: Thr-315, Thr-317, and Thr-377. The tract at residues 379-498 (TLGPIQPTRV…GEPNQRPELK (120 aa)) is disordered. The segment covering 409–445 (VEPTAVITPPTTTTKKPRVSTPKPATPSTDSSTTTTR) has biased composition (low complexity). Residues 461–483 (TTKAPITRLETASPPTRIRTTTS) form an O-glycosylated at seven sites with GalNAc region. Residues 601–710 (KAPARFKARL…LSIAVTGSGS (110 aa)) form the Peptidase S72 domain. N-linked (GlcNAc...) asparagine glycosylation is found at Asn-639, Asn-647, and Asn-659. Topologically, residues 652–751 (SIVVEWTNNT…SSEDDVYLHT (100 aa)) are extracellular. A disulfide bond links Cys-667 and Cys-711. The interval 722–744 (PSPGSSAAPATEVPDRDPEKSSE) is disordered. Residues 734–744 (VPDRDPEKSSE) are compositionally biased toward basic and acidic residues. The chain crosses the membrane as a helical span at residues 752–772 (VIPAVVVAAILLIAGIIAMIC). Residues 773 to 893 (YRKKRKGKLT…YRSPPPYVPP (121 aa)) are Cytoplasmic-facing. Positions 774 to 780 (RKKRKGK) match the Nuclear localization signal motif. The residue at position 788 (Thr-788) is a Phosphothreonine. The segment at 817-893 (LQEEKAPLPP…YRSPPPYVPP (77 aa)) is required for interaction with CAV3. The segment at 821–893 (KAPLPPPEYP…YRSPPPYVPP (73 aa)) is disordered. Polar residues predominate over residues 830 to 844 (PNQSMPETTPLNQDT). Residues 857–868 (NAPPYQPPPPFT) show a composition bias toward pro residues. Residues 878 to 893 (PKNMTPYRSPPPYVPP) form a required for binding DMD and UTRN region. The PPXY motif motif lies at 887-890 (PPPY). Tyr-890 is modified (phosphotyrosine; by SRC).

As to quaternary structure, monomer. Heterodimer of alpha- and beta-dystroglycan subunits which are the central components of the dystrophin-glycoprotein complex. This complex then can form a dystrophin-associated glycoprotein complex (DGC) which is composed of three subcomplexes: a cytoplasmic complex comprised of DMD (or UTRN), DTNA and a number of syntrophins, such as SNTB1, SNTB2, SNTG1 and SNTG2, the transmembrane dystroglycan complex, and the sarcoglycan-sarcospan complex. Interacts (via the N-terminal of alphaDAG1) with LARGE1; the interaction enhances laminin binding. Interacts with SGCD. Interacts with AGR2 and AGR3. Interacts (betaDAG1) with DMD; the interaction is inhibited by phosphorylation on the PPXY motif. Interacts (betaDAG1, via its PPXY motif) with UTRN (via its WWW and ZZ domains); the interaction is inhibited by phosphorylation on the PPXY motif. Interacts (betaDAG1, via its phosphorylated PPXY motif) with the SH2 domain-containing proteins, FYN, CSK, NCK and SHC. Interacts (betaDAG1) with CAV3 (via a central WW-like domain); the interaction disrupts the binding of DMD. BetaDAG1 directly interacts with ANK3, but not with ANK2; this interaction does not interfere with DMD-binding and is required for retention at costameres. Identified in a dystroglycan complex that contains at least PRX, DRP2, UTRN, DMD and DAG1. Interacts with POMGNT1. BetaDAG1 interacts with CD93. O-glycosylated. POMGNT1 catalyzes the initial addition of N-acetylglucosamine, giving rise to the GlcNAc(beta1-2)Man(alpha1-)O-Ser/Thr moiety and thus providing the necessary basis for the addition of further carbohydrate moieties. Heavily O-glycosylated comprising of up to two thirds of its mass and the carbohydrate composition differs depending on tissue type. Mucin-type O-glycosylation is important for ligand binding activity. O-mannosylation is found in high abundance in both brain and muscle where the most abundant glycan is Sia-alpha-2-3-Gal-beta-1-4-Glc-NAc-beta-1-2-Man. In muscle, glycosylation on Thr-315, Thr-317, Thr-379 by a phosphorylated O-mannosyl glycan with the structure 2-(N-acetylamido)-2-deoxygalactosyl-beta-1,3-2-(N-acetylamido)-2-deoxyglucosyl-beta-1,4-6-phosphomannose is mediated by like-acetylglucosaminyltransferase (LARGE1) protein amd is required for laminin binding. O-glycosylated in the N-terminal region with a core 1 or possibly core 8 glycan. The brain form displays a unique glycosylation pattern which is absent in other tissues; this form shows enhanced binding to laminin LAMA5 compared to the skeletal muscle form. In terms of processing, N-glycosylated. Post-translationally, autolytic cleavage produces the alpha and beta subunits. In cutaneous cells, as well as in certain pathological conditions, shedding of beta-dystroglycan can occur releasing a peptide of about 30 kDa. SRC-mediated phosphorylation of the PPXY motif of the beta subunit recruits SH2 domain-containing proteins, but inhibits binding to WWW domain-containing proteins, DMD and UTRN. This phosphorylation also inhibits nuclear entry. As to expression, detected in brain and kidney (at protein level). Detected in sciatic nerve (at protein level). Expressed in neurons and muscle cells (at protein level). Expressed in a variety of tissues. In brain, expressed in the hippocampal formation, the olfactory bulb, the cerebellum and the thalamus. In the peripheral nerve system, expressed in Schwann cells.

It localises to the secreted. The protein resides in the extracellular space. Its subcellular location is the cell membrane. The protein localises to the cytoplasm. It is found in the cytoskeleton. It localises to the nucleus. The protein resides in the nucleoplasm. Its subcellular location is the sarcolemma. The protein localises to the postsynaptic cell membrane. The dystroglycan complex is involved in a number of processes including laminin and basement membrane assembly, sarcolemmal stability, cell survival, peripheral nerve myelination, nodal structure, cell migration, and epithelial polarization. In terms of biological role, extracellular peripheral glycoprotein that acts as a receptor for extracellular matrix proteins containing laminin-G domains, and for certain adenoviruses. Receptor for laminin-2 (LAMA2) and agrin in peripheral nerve Schwann cells. Also acts as a receptor for laminin LAMA5. Functionally, transmembrane protein that plays important roles in connecting the extracellular matrix to the cytoskeleton. Acts as a cell adhesion receptor in both muscle and non-muscle tissues. Receptor for both DMD and UTRN and, through these interactions, scaffolds axin to the cytoskeleton. Also functions in cell adhesion-mediated signaling and implicated in cell polarity. The chain is Dystroglycan 1 from Mus musculus (Mouse).